A 124-amino-acid chain; its full sequence is Cytochrome c2 (124 aa).

The residue at position 1 (Q1) is a Pyrrolidone carboxylic acid. Residues C16, C19, H20, and M85 each coordinate heme c.

The protein belongs to the cytochrome c family. In terms of processing, binds 1 heme c group covalently per subunit.

The protein resides in the periplasm. Functionally, cytochrome c2 is found mainly in purple, non-sulfur, photosynthetic bacteria where it functions as the electron donor to the oxidized bacteriochlorophyll in the photophosphorylation pathway. However, it may also have a role in the respiratory chain and is found in some non-photosynthetic bacteria. This Afifella marina (Rhodobium marinum) protein is Cytochrome c2.